A 176-amino-acid chain; its full sequence is Inner membrane-spanning protein YciB (176 aa).

Helical transmembrane passes span 24 to 44 (TATA…AFRH), 49 to 69 (PMLW…LVLH), 76 to 96 (WKPT…ALGF), 121 to 141 (YVWA…AYNF), and 149 to 169 (FKLF…SLWL).

Belongs to the YciB family.

It is found in the cell inner membrane. In terms of biological role, plays a role in cell envelope biogenesis, maintenance of cell envelope integrity and membrane homeostasis. The polypeptide is Inner membrane-spanning protein YciB (Paraburkholderia phymatum (strain DSM 17167 / CIP 108236 / LMG 21445 / STM815) (Burkholderia phymatum)).